Here is a 224-residue protein sequence, read N- to C-terminus: UPF0502 protein Psyr_2419 (224 aa).

This sequence belongs to the UPF0502 family.

The polypeptide is UPF0502 protein Psyr_2419 (Pseudomonas syringae pv. syringae (strain B728a)).